Consider the following 360-residue polypeptide: Peptide chain release factor 1 (360 aa).

Q237 carries the post-translational modification N5-methylglutamine.

It belongs to the prokaryotic/mitochondrial release factor family. In terms of processing, methylated by PrmC. Methylation increases the termination efficiency of RF1.

It is found in the cytoplasm. Peptide chain release factor 1 directs the termination of translation in response to the peptide chain termination codons UAG and UAA. The polypeptide is Peptide chain release factor 1 (Pseudomonas savastanoi pv. phaseolicola (strain 1448A / Race 6) (Pseudomonas syringae pv. phaseolicola (strain 1448A / Race 6))).